We begin with the raw amino-acid sequence, 308 residues long: MNWEKFVEEKVKEIRETVGDSKAIIALSGGVDSSTAAVLAYKAIGDKLHAVFVNTGFLRKGEPEFVVKTFRDEFGMNLHYVDAQDRFFSALKGVTDPEEKRKIIGRVFIEVFEEVAREIGAEYLIQGTIAPDWIESQGKIKSHHNVGGLPERLNLKLIEPLRDLYKDEVRELAKFLGLPEKIYNRMPFPGPGLAVRVIGEVTPEKIRIVREANAIVEEEVERAGLRPWQAFAVLLGVKTVGVQGDIRAYKETIAVRIVESLDGMTANAMNVPWEVLQRIAFRITSEIPEVGRVLYDITNKPPATIEFE.

One can recognise a GMPS ATP-PPase domain in the interval 1–185 (MNWEKFVEEK…LGLPEKIYNR (185 aa)). 28–34 (SGGVDSS) contributes to the ATP binding site.

In terms of assembly, heterodimer composed of a glutamine amidotransferase subunit (A) and a GMP-binding subunit (B).

The catalysed reaction is XMP + L-glutamine + ATP + H2O = GMP + L-glutamate + AMP + diphosphate + 2 H(+). Its pathway is purine metabolism; GMP biosynthesis; GMP from XMP (L-Gln route): step 1/1. In terms of biological role, catalyzes the synthesis of GMP from XMP. This is GMP synthase [glutamine-hydrolyzing] subunit B (guaAB) from Pyrococcus abyssi (strain GE5 / Orsay).